Here is a 270-residue protein sequence, read N- to C-terminus: MPELPEVETTLRGVSPHILGRKVTDLVIRQPRLRWPIPLELSEQLPGQQLKAASRRGKYLLLSFNTGTALIHLGMSGSLRIVKPEEPPLFHDHFDMHFGNRILRYCDPRRFGCLLWEAGDIHQHALLRDLGPEPLGDDFTPAYLYERSRKRTQAIKQFIMDSKIVVGVGNIYANESLFMAGIKPIRKAGALSRHMCEDLVRDIRFVLQRSITQGGTTLRDFVGGDGKPGYFQQQLLVYGRGGEACKTCQKPLKEIRMNDRTTVYCVTCQQ.

Pro2 serves as the catalytic Schiff-base intermediate with DNA. Glu3 functions as the Proton donor in the catalytic mechanism. Residue Lys58 is the Proton donor; for beta-elimination activity of the active site. His91, Arg109, and Arg151 together coordinate DNA. The FPG-type zinc-finger motif lies at 236–270 (LVYGRGGEACKTCQKPLKEIRMNDRTTVYCVTCQQ). Arg260 serves as the catalytic Proton donor; for delta-elimination activity.

The protein belongs to the FPG family. In terms of assembly, monomer. Requires Zn(2+) as cofactor.

It catalyses the reaction Hydrolysis of DNA containing ring-opened 7-methylguanine residues, releasing 2,6-diamino-4-hydroxy-5-(N-methyl)formamidopyrimidine.. It carries out the reaction 2'-deoxyribonucleotide-(2'-deoxyribose 5'-phosphate)-2'-deoxyribonucleotide-DNA = a 3'-end 2'-deoxyribonucleotide-(2,3-dehydro-2,3-deoxyribose 5'-phosphate)-DNA + a 5'-end 5'-phospho-2'-deoxyribonucleoside-DNA + H(+). Functionally, involved in base excision repair of DNA damaged by oxidation or by mutagenic agents. Acts as a DNA glycosylase that recognizes and removes damaged bases. Has a preference for oxidized purines, such as 7,8-dihydro-8-oxoguanine (8-oxoG). Has AP (apurinic/apyrimidinic) lyase activity and introduces nicks in the DNA strand. Cleaves the DNA backbone by beta-delta elimination to generate a single-strand break at the site of the removed base with both 3'- and 5'-phosphates. This chain is Formamidopyrimidine-DNA glycosylase, found in Cellvibrio japonicus (strain Ueda107) (Pseudomonas fluorescens subsp. cellulosa).